Consider the following 811-residue polypeptide: Probable inorganic carbon transporter subunit DabA (811 aa).

Residues cysteine 336, aspartate 338, histidine 498, and cysteine 513 each contribute to the Zn(2+) site.

The protein belongs to the inorganic carbon transporter (TC 9.A.2) DabA family. Forms a complex with DabB. The cofactor is Zn(2+).

The protein localises to the cell inner membrane. In terms of biological role, part of an energy-coupled inorganic carbon pump. The polypeptide is Probable inorganic carbon transporter subunit DabA (Rhodospirillum centenum (strain ATCC 51521 / SW)).